The chain runs to 75 residues: Ferredoxin-thioredoxin reductase, variable chain (75 aa).

The interaction with ferredoxin stretch occupies residues 43–46 (QGRP).

This sequence belongs to the ferredoxin thioredoxin reductase alpha subunit family. As to quaternary structure, heterodimer of subunit A (variable subunit) and subunit B (catalytic subunit). Heterodimeric FTR forms a complex with ferredoxin and thioredoxin.

Its function is as follows. Variable subunit of the ferredoxin-thioredoxin reductase (FTR), which catalyzes the two-electron reduction of thioredoxins by the electrons provided by reduced ferredoxin. The polypeptide is Ferredoxin-thioredoxin reductase, variable chain (ftrV) (Synechocystis sp. (strain ATCC 27184 / PCC 6803 / Kazusa)).